The following is a 434-amino-acid chain: Glycerol-3-phosphate acyltransferase 3 (434 aa).

The helical transmembrane segment at 14–34 threads the bilayer; sequence WLTLVLGFILLPSVFGVSLGI. S68 and S77 each carry phosphoserine. 2 consecutive transmembrane segments (helical) span residues 137-157 and 161-181; these read ISLR…CVLL and VTLA…VGQL. Positions 229 to 234 match the HXXXXD motif motif; the sequence is HTSPID.

It belongs to the 1-acyl-sn-glycerol-3-phosphate acyltransferase family. As to expression, widely expressed. Expressed in liver, kidney, testis, brain, heart, skeletal muscle, thyroid, prostate, thymus and placenta. Also expressed lung and adipose tissue.

It is found in the endoplasmic reticulum membrane. It carries out the reaction sn-glycerol 3-phosphate + an acyl-CoA = a 1-acyl-sn-glycero-3-phosphate + CoA. The catalysed reaction is a 1-acyl-sn-glycero-3-phosphate + an acyl-CoA = a 1,2-diacyl-sn-glycero-3-phosphate + CoA. It catalyses the reaction dodecanoyl-CoA + sn-glycerol 3-phosphate = 1-dodecanoyl-sn-glycerol 3-phosphate + CoA. The enzyme catalyses sn-glycerol 3-phosphate + hexadecanoyl-CoA = 1-hexadecanoyl-sn-glycero-3-phosphate + CoA. It carries out the reaction sn-glycerol 3-phosphate + (9Z)-octadecenoyl-CoA = 1-(9Z-octadecenoyl)-sn-glycero-3-phosphate + CoA. The catalysed reaction is (9Z,12Z)-octadecadienoyl-CoA + sn-glycerol 3-phosphate = 1-(9Z,12Z)-octadecadienoyl-sn-glycero-3-phosphate + CoA. It catalyses the reaction 1-tetradecanoyl-sn-glycerol 3-phosphate + (9Z)-octadecenoyl-CoA = 1-tetradecanoyl-2-(9Z)-octadecenoyl-sn-glycero-3-phosphate + CoA. The enzyme catalyses 1-hexadecanoyl-sn-glycero-3-phosphate + (9Z)-octadecenoyl-CoA = 1-hexadecanoyl-2-(9Z-octadecenoyl)-sn-glycero-3-phosphate + CoA. It carries out the reaction 1-(9Z-octadecenoyl)-sn-glycero-3-phosphate + (9Z)-octadecenoyl-CoA = 1,2-di-(9Z-octadecenoyl)-sn-glycero-3-phosphate + CoA. The catalysed reaction is 1-(6Z,9Z,12Z-octadecatrienoyl)-sn-glycero-3-phosphate + (9Z)-octadecenoyl-CoA = (6Z,9Z,12Z)-octadecatrienoyl-2-(9Z)-octadecenoyl-sn-glycero-3-phosphate + CoA. It catalyses the reaction 1-(9Z,12Z,15Z)-octadecatrienoyl-sn-glycero-3-phosphate + (9Z)-octadecenoyl-CoA = 1-(9Z,12Z,15Z)-octadecatrienoyl-2-(9Z)-octadecenoyl-sn-glycero-3-phosphate + CoA. The enzyme catalyses 1-(9Z-octadecenoyl)-sn-glycero-3-phosphate + tetradecanoyl-CoA = 1-(9Z)-octadecenoyl-2-tetradecanoyl-sn-glycero-3-phosphate + CoA. It carries out the reaction 1-(9Z-octadecenoyl)-sn-glycero-3-phosphate + hexadecanoyl-CoA = 1-(9Z)-octadecenoyl-2-hexadecanoyl-sn-glycero-3-phosphate + CoA. The catalysed reaction is 1-(9Z-octadecenoyl)-sn-glycero-3-phosphate + octadecanoyl-CoA = 1-(9Z-octadecenoyl)-2-octadecanoyl-sn-glycero-3-phosphate + CoA. It catalyses the reaction 1-(9Z-octadecenoyl)-sn-glycero-3-phosphate + (9Z,12Z)-octadecadienoyl-CoA = 1-(9Z)-octadecenoyl-2-(9Z,12Z)-octadecadienoyl-sn-glycero-3-phosphate + CoA. The enzyme catalyses 1-(5Z,8Z,11Z,14Z-eicosatetraenoyl)-sn-glycero-3-phosphate + (9Z)-octadecenoyl-CoA = 1-(5Z,8Z,11Z,14Z)-eicosatetraenoyl-2-(9Z)-octadecenoyl-sn-glycero-3-phosphate + CoA. The protein operates within glycerolipid metabolism; triacylglycerol biosynthesis. Its pathway is phospholipid metabolism; CDP-diacylglycerol biosynthesis; CDP-diacylglycerol from sn-glycerol 3-phosphate: step 1/3. With respect to regulation, inhibited by N-ethylmaleimide (NEM). Functionally, converts glycerol-3-phosphate to 1-acyl-sn-glycerol-3-phosphate (lysophosphatidic acid or LPA) by incorporating an acyl moiety at the sn-1 position of the glycerol backbone. Also converts LPA into 1,2-diacyl-sn-glycerol-3-phosphate (phosphatidic acid or PA) by incorporating an acyl moiety at the sn-2 position of the glycerol backbone. Protects cells against lipotoxicity. The protein is Glycerol-3-phosphate acyltransferase 3 of Homo sapiens (Human).